The chain runs to 522 residues: Putative zinc finger protein 286B (522 aa).

The interval 1–30 (METDLAEMPEKGVLSSQDSPHFQEKSTEEG) is disordered. C2H2-type zinc fingers lie at residues 244–266 (HKCN…QRVH), 272–294 (YTCN…QRTH), 299–321 (FECR…QRIH), 327–349 (YECN…QLIH), 355–377 (YECN…QRTH), 383–405 (YKCQ…QRVH), 411–433 (YECS…QRIH), 439–461 (YECS…QRIH), 467–489 (YKCS…QRTH), and 495–517 (FRCN…QRVH).

The protein belongs to the krueppel C2H2-type zinc-finger protein family.

The protein resides in the nucleus. May be involved in transcriptional regulation. This chain is Putative zinc finger protein 286B (ZNF286B), found in Homo sapiens (Human).